We begin with the raw amino-acid sequence, 144 residues long: Ribonuclease H (144 aa).

One can recognise an RNase H type-1 domain in the interval 1-141 (MDKIDIYSDG…ADALANRGVE (141 aa)). Mg(2+)-binding residues include Asp-9, Glu-47, Asp-69, and Asp-133.

It belongs to the RNase H family. As to quaternary structure, monomer. It depends on Mg(2+) as a cofactor.

The protein localises to the cytoplasm. It carries out the reaction Endonucleolytic cleavage to 5'-phosphomonoester.. Functionally, endonuclease that specifically degrades the RNA of RNA-DNA hybrids. The chain is Ribonuclease H from Janthinobacterium sp. (strain Marseille) (Minibacterium massiliensis).